The chain runs to 185 residues: Early nodulin-like protein 17 (185 aa).

The first 21 residues, 1–21, serve as a signal peptide directing secretion; sequence MARRDQLVSFLCFFLIVSAVA. Residues 37 to 137 form the Phytocyanin domain; sequence KQYVVGGRSG…GQRLMINVDS (101 aa). 2 N-linked (GlcNAc...) asparagine glycosylation sites follow: asparagine 79 and asparagine 94. Cysteine 93 and cysteine 125 form a disulfide bridge. The interval 136–155 is disordered; it reads DSAPSPSPSPSPAPQEAATA. Serine 156 carries the GPI-anchor amidated serine lipid modification. The propeptide at 157–185 is removed in mature form; the sequence is AATSSSAATAAHALLLAAMAMMGLILGEW.

This sequence belongs to the early nodulin-like (ENODL) family. Expressed ubiquitously. Accumulates mainly in anthers, stigmas and ovaries.

It is found in the cell membrane. Its function is as follows. May act as a carbohydrate transporter. Required for male fertility and seed yield. In Oryza sativa subsp. japonica (Rice), this protein is Early nodulin-like protein 17.